A 760-amino-acid chain; its full sequence is Molybdenum cofactor sulfurase 2 (760 aa).

N6-(pyridoxal phosphate)lysine is present on Lys223. Cys389 is a catalytic residue. Residues 608–758 (QSDDEARTLR…LHCGSPLQVV (151 aa)) enclose the MOSC domain.

It belongs to the class-V pyridoxal-phosphate-dependent aminotransferase family. MOCOS subfamily. Requires pyridoxal 5'-phosphate as cofactor.

It carries out the reaction Mo-molybdopterin + L-cysteine + AH2 = thio-Mo-molybdopterin + L-alanine + A + H2O. Sulfurates the molybdenum cofactor. Sulfation of molybdenum is essential for xanthine dehydrogenase (XDH) and aldehyde oxidase (ADO) enzymes in which molybdenum cofactor is liganded by 1 oxygen and 1 sulfur atom in active form. This chain is Molybdenum cofactor sulfurase 2, found in Culex quinquefasciatus (Southern house mosquito).